The following is a 247-amino-acid chain: Ribosomal RNA large subunit methyltransferase E (247 aa).

Positions M1–Y21 are disordered. S-adenosyl-L-methionine contacts are provided by G88, W90, D111, D127, and D151. K191 (proton acceptor) is an active-site residue.

The protein belongs to the class I-like SAM-binding methyltransferase superfamily. RNA methyltransferase RlmE family.

It localises to the cytoplasm. The enzyme catalyses uridine(2552) in 23S rRNA + S-adenosyl-L-methionine = 2'-O-methyluridine(2552) in 23S rRNA + S-adenosyl-L-homocysteine + H(+). Functionally, specifically methylates the uridine in position 2552 of 23S rRNA at the 2'-O position of the ribose in the fully assembled 50S ribosomal subunit. In Bartonella henselae (strain ATCC 49882 / DSM 28221 / CCUG 30454 / Houston 1) (Rochalimaea henselae), this protein is Ribosomal RNA large subunit methyltransferase E.